Reading from the N-terminus, the 271-residue chain is 3-methyl-2-oxobutanoate hydroxymethyltransferase (271 aa).

Residues D51 and D90 each contribute to the Mg(2+) site. 3-methyl-2-oxobutanoate is bound by residues D51–S52, D90, and K118. Position 120 (E120) interacts with Mg(2+). The active-site Proton acceptor is the E186.

It belongs to the PanB family. As to quaternary structure, homodecamer; pentamer of dimers. Mg(2+) serves as cofactor.

The protein localises to the cytoplasm. The catalysed reaction is 3-methyl-2-oxobutanoate + (6R)-5,10-methylene-5,6,7,8-tetrahydrofolate + H2O = 2-dehydropantoate + (6S)-5,6,7,8-tetrahydrofolate. It participates in cofactor biosynthesis; (R)-pantothenate biosynthesis; (R)-pantoate from 3-methyl-2-oxobutanoate: step 1/2. Functionally, catalyzes the reversible reaction in which hydroxymethyl group from 5,10-methylenetetrahydrofolate is transferred onto alpha-ketoisovalerate to form ketopantoate. The protein is 3-methyl-2-oxobutanoate hydroxymethyltransferase of Xanthomonas oryzae pv. oryzae (strain PXO99A).